The primary structure comprises 385 residues: Cotranscriptional regulator ARB2A homolog (385 aa).

Disordered stretches follow at residues methionine 1–glutamate 65 and glutamate 220–leucine 239. A compositionally biased stretch (low complexity) spans asparagine 52–asparagine 62. Residues glutamate 220–lysine 238 show a composition bias toward basic and acidic residues.

The protein belongs to the ARB2A family.

The sequence is that of Cotranscriptional regulator ARB2A homolog from Dictyostelium discoideum (Social amoeba).